Consider the following 213-residue polypeptide: Agglutinin isolectin 2 (213 aa).

Positions 1 to 27 (MRKMMSTMALTLGAAVFLAFAAATAQA) are cleaved as a signal peptide. Q28 bears the Pyrrolidone carboxylic acid mark. 4 consecutive Chitin-binding type-1 domains span residues 28-69 (QRCG…ACWT), 70-112 (SKRC…PCRA), 113-155 (DIKC…ACST), and 156-198 (DKPC…GCDA). 16 cysteine pairs are disulfide-bonded: C30/C45, C39/C51, C44/C58, C62/C67, C73/C88, C82/C94, C87/C101, C105/C110, C116/C131, C125/C137, C130/C144, C148/C153, C159/C174, C168/C180, C173/C187, and C191/C196. 37–39 (MEC) contributes to the substrate binding site. 89-100 (SQYGHCGFGAEY) is a substrate binding site. 141-142 (SE) is a binding site for substrate. Residues 199-213 (VFAGAITANSTLLAE) constitute a propeptide that is removed on maturation.

As to quaternary structure, homodimer, u-shaped.

N-acetyl-D-glucosamine / N-acetyl-D-neuraminic acid binding lectin. The sequence is that of Agglutinin isolectin 2 from Triticum aestivum (Wheat).